A 91-amino-acid polypeptide reads, in one-letter code: Cell division topological specificity factor (91 aa).

It belongs to the MinE family.

Functionally, prevents the cell division inhibition by proteins MinC and MinD at internal division sites while permitting inhibition at polar sites. This ensures cell division at the proper site by restricting the formation of a division septum at the midpoint of the long axis of the cell. In Caldanaerobacter subterraneus subsp. tengcongensis (strain DSM 15242 / JCM 11007 / NBRC 100824 / MB4) (Thermoanaerobacter tengcongensis), this protein is Cell division topological specificity factor.